The following is a 70-amino-acid chain: Uteroglobin (70 aa).

Belongs to the secretoglobin family. Antiparallel homodimer; disulfide-linked. Interaction with LMBR1L is controversial. In terms of tissue distribution, club cells (nonciliated cells of the surface epithelium of the pulmonary airways).

The protein localises to the secreted. Its function is as follows. Binds phosphatidylcholine, phosphatidylinositol, polychlorinated biphenyls (PCB) and weakly progesterone, potent inhibitor of phospholipase A2. The polypeptide is Uteroglobin (SCGB1A1) (Macaca fuscata fuscata (Japanese macaque)).